The chain runs to 237 residues: Class B acid phosphatase (237 aa).

Residues 1–25 (MRKVSLALSAACLLFTLNYTASALA) form the signal peptide. Asp69 functions as the Nucleophile in the catalytic mechanism. Mg(2+) is bound by residues Asp69 and Asp71. Asp71 serves as the catalytic Proton donor. Substrate-binding positions include 137–138 (TG) and Lys177. Asp192 is a Mg(2+) binding site.

This sequence belongs to the class B bacterial acid phosphatase family. Homotetramer. Mg(2+) serves as cofactor.

The protein resides in the periplasm. It carries out the reaction a phosphate monoester + H2O = an alcohol + phosphate. Functionally, dephosphorylates several organic phosphate monoesters. Also has a phosphotransferase activity catalyzing the transfer of low-energy phosphate groups from organic phosphate monoesters to free hydroxyl groups of various organic compounds. The sequence is that of Class B acid phosphatase from Citrobacter rodentium (strain ICC168) (Citrobacter freundii biotype 4280).